The primary structure comprises 693 residues: Elongation factor G (693 aa).

The tr-type G domain maps to 9 to 283 (ERVRNIGIIA…AVCDYLPSPL (275 aa)). GTP is bound by residues 18–25 (AHIDAGKT), 82–86 (DTPGH), and 136–139 (NKMD).

It belongs to the TRAFAC class translation factor GTPase superfamily. Classic translation factor GTPase family. EF-G/EF-2 subfamily.

The protein resides in the cytoplasm. In terms of biological role, catalyzes the GTP-dependent ribosomal translocation step during translation elongation. During this step, the ribosome changes from the pre-translocational (PRE) to the post-translocational (POST) state as the newly formed A-site-bound peptidyl-tRNA and P-site-bound deacylated tRNA move to the P and E sites, respectively. Catalyzes the coordinated movement of the two tRNA molecules, the mRNA and conformational changes in the ribosome. In Dehalococcoides mccartyi (strain ATCC BAA-2100 / JCM 16839 / KCTC 5957 / BAV1), this protein is Elongation factor G.